A 100-amino-acid chain; its full sequence is uncharacterized protein (100 aa).

Residues 68 to 91 (EQYASGAGEKRKEQSSGNSRRKDP) show a composition bias toward basic and acidic residues. The disordered stretch occupies residues 68–100 (EQYASGAGEKRKEQSSGNSRRKDPSLYNWSDVK).

It belongs to the chlamydial CPn_0121/CT_031/TC_0300 family.

This is an uncharacterized protein from Chlamydia muridarum (strain MoPn / Nigg).